Here is a 958-residue protein sequence, read N- to C-terminus: Glycine dehydrogenase (decarboxylating) (958 aa).

K703 bears the N6-(pyridoxal phosphate)lysine mark.

This sequence belongs to the GcvP family. In terms of assembly, the glycine cleavage system is composed of four proteins: P, T, L and H. The cofactor is pyridoxal 5'-phosphate.

The enzyme catalyses N(6)-[(R)-lipoyl]-L-lysyl-[glycine-cleavage complex H protein] + glycine + H(+) = N(6)-[(R)-S(8)-aminomethyldihydrolipoyl]-L-lysyl-[glycine-cleavage complex H protein] + CO2. In terms of biological role, the glycine cleavage system catalyzes the degradation of glycine. The P protein binds the alpha-amino group of glycine through its pyridoxal phosphate cofactor; CO(2) is released and the remaining methylamine moiety is then transferred to the lipoamide cofactor of the H protein. The polypeptide is Glycine dehydrogenase (decarboxylating) (Nitrobacter hamburgensis (strain DSM 10229 / NCIMB 13809 / X14)).